Reading from the N-terminus, the 128-residue chain is uncharacterized protein (128 aa).

A coiled-coil region spans residues isoleucine 95–lysine 123.

Its subcellular location is the cellular thylakoid membrane. This is an uncharacterized protein from Synechocystis sp. (strain ATCC 27184 / PCC 6803 / Kazusa).